The chain runs to 353 residues: Guanine nucleotide-binding protein G(q) subunit alpha (353 aa).

2 S-palmitoyl cysteine lipidation sites follow: cysteine 3 and cysteine 4. Residues 32–353 (RELKLLLLGT…QLNLKEYNLV (322 aa)) enclose the G-alpha domain. A G1 motif region spans residues 35-48 (KLLLLGTGESGKST). GTP contacts are provided by residues 40–47 (GTGESGKS), 174–180 (LRVRVPT), 199–203 (DVGGQ), 268–271 (NKKD), and alanine 325. Residues serine 47 and threonine 180 each contribute to the Mg(2+) site. Residues 172-180 (DILRVRVPT) form a G2 motif region. The tract at residues 195 to 204 (FRMVDVGGQR) is G3 motif. The G4 motif stretch occupies residues 264–271 (ILFLNKKD). The tract at residues 323–328 (TCATDT) is G5 motif.

Belongs to the G-alpha family. G(q) subfamily. As to quaternary structure, g proteins are composed of 3 units; alpha, beta and gamma. The alpha chain contains the guanine nucleotide binding site.

In terms of biological role, guanine nucleotide-binding proteins (G proteins) are involved as modulators or transducers in various transmembrane signaling systems. The protein is Guanine nucleotide-binding protein G(q) subunit alpha of Lymnaea stagnalis (Great pond snail).